The following is a 493-amino-acid chain: Cysteine--tRNA ligase (493 aa).

Cys29 is a Zn(2+) binding site. The 'HIGH' region signature appears at 31–41; the sequence is VTVYDLCHLGH. The disordered stretch occupies residues 154–179; that stretch reads KLSGRDPDDQQQGASGRTADGEESRK. Positions 213, 238, and 242 each coordinate Zn(2+). A 'KMSKS' region motif is present at residues 270–274; that stretch reads KMSKS. Residue Lys273 participates in ATP binding.

It belongs to the class-I aminoacyl-tRNA synthetase family. In terms of assembly, monomer. It depends on Zn(2+) as a cofactor.

It is found in the cytoplasm. It catalyses the reaction tRNA(Cys) + L-cysteine + ATP = L-cysteinyl-tRNA(Cys) + AMP + diphosphate. This is Cysteine--tRNA ligase from Synechococcus sp. (strain CC9605).